The following is a 388-amino-acid chain: Chaperone protein DnaJ (388 aa).

One can recognise a J domain in the interval 5-70; that stretch reads DYYTTLNISN…KKRNLYDQYG (66 aa). The CR-type zinc finger occupies 135–213; that stretch reads GIKKEIRIPK…CFGQGRIKKS (79 aa). 8 residues coordinate Zn(2+): Cys-148, Cys-151, Cys-165, Cys-168, Cys-187, Cys-190, Cys-201, and Cys-204. 4 CXXCXGXG motif repeats span residues 148 to 155, 165 to 172, 187 to 194, and 201 to 208; these read CQSCYGYG, CTSCNGHG, CSTCRGTG, and CKICFGQG.

The protein belongs to the DnaJ family. In terms of assembly, homodimer. Zn(2+) is required as a cofactor.

The protein resides in the cytoplasm. In terms of biological role, participates actively in the response to hyperosmotic and heat shock by preventing the aggregation of stress-denatured proteins and by disaggregating proteins, also in an autonomous, DnaK-independent fashion. Unfolded proteins bind initially to DnaJ; upon interaction with the DnaJ-bound protein, DnaK hydrolyzes its bound ATP, resulting in the formation of a stable complex. GrpE releases ADP from DnaK; ATP binding to DnaK triggers the release of the substrate protein, thus completing the reaction cycle. Several rounds of ATP-dependent interactions between DnaJ, DnaK and GrpE are required for fully efficient folding. Also involved, together with DnaK and GrpE, in the DNA replication of plasmids through activation of initiation proteins. This chain is Chaperone protein DnaJ, found in Buchnera aphidicola subsp. Cinara cedri (strain Cc).